Consider the following 312-residue polypeptide: Lipoyl synthase (312 aa).

7 residues coordinate [4Fe-4S] cluster: Cys-51, Cys-56, Cys-62, Cys-77, Cys-81, Cys-84, and Ser-290. The 218-residue stretch at 63-280 (WSRKTATYLA…RTIGTSLGLF (218 aa)) folds into the Radical SAM core domain.

It belongs to the radical SAM superfamily. Lipoyl synthase family. [4Fe-4S] cluster is required as a cofactor.

Its subcellular location is the cytoplasm. The enzyme catalyses [[Fe-S] cluster scaffold protein carrying a second [4Fe-4S](2+) cluster] + N(6)-octanoyl-L-lysyl-[protein] + 2 oxidized [2Fe-2S]-[ferredoxin] + 2 S-adenosyl-L-methionine + 4 H(+) = [[Fe-S] cluster scaffold protein] + N(6)-[(R)-dihydrolipoyl]-L-lysyl-[protein] + 4 Fe(3+) + 2 hydrogen sulfide + 2 5'-deoxyadenosine + 2 L-methionine + 2 reduced [2Fe-2S]-[ferredoxin]. Its pathway is protein modification; protein lipoylation via endogenous pathway; protein N(6)-(lipoyl)lysine from octanoyl-[acyl-carrier-protein]: step 2/2. Functionally, catalyzes the radical-mediated insertion of two sulfur atoms into the C-6 and C-8 positions of the octanoyl moiety bound to the lipoyl domains of lipoate-dependent enzymes, thereby converting the octanoylated domains into lipoylated derivatives. This chain is Lipoyl synthase, found in Chlamydia caviae (strain ATCC VR-813 / DSM 19441 / 03DC25 / GPIC) (Chlamydophila caviae).